Consider the following 214-residue polypeptide: Large ribosomal subunit protein uL16 (214 aa).

Arg-32 carries the citrulline modification. Lys-175 participates in a covalent cross-link: Glycyl lysine isopeptide (Lys-Gly) (interchain with G-Cter in SUMO2). Residue Lys-188 forms a Glycyl lysine isopeptide (Lys-Gly) (interchain with G-Cter in ubiquitin) linkage.

The protein belongs to the universal ribosomal protein uL16 family. As to quaternary structure, component of the large ribosomal subunit. Mature ribosomes consist of a small (40S) and a large (60S) subunit. The 40S subunit contains about 33 different proteins and 1 molecule of RNA (18S). The 60S subunit contains about 49 different proteins and 3 molecules of RNA (28S, 5.8S and 5S). In terms of processing, citrullinated by PADI4. Ufmylated by UFL1.

The protein resides in the cytoplasm. Component of the large ribosomal subunit. Plays a role in the formation of actively translating ribosomes. May play a role in the embryonic brain development. The polypeptide is Large ribosomal subunit protein uL16 (Rattus norvegicus (Rat)).